The primary structure comprises 436 residues: 2-aminohexano-6-lactam racemase (436 aa).

Residues 110-111, Tyr-137, and 238-241 each bind pyridoxal 5'-phosphate; these read GS and DEVK. Tyr-137 is an active-site residue. Lys-267 carries the post-translational modification N6-(pyridoxal phosphate)lysine. A pyridoxal 5'-phosphate-binding site is contributed by Thr-295.

This sequence belongs to the class-III pyridoxal-phosphate-dependent aminotransferase family. Monomer. Pyridoxal 5'-phosphate serves as cofactor.

The enzyme catalyses L-2-aminohexano-6-lactam = D-2-aminohexano-6-lactam. Functionally, catalyzes the interconversion of L-alpha-amino-epsilon-caprolactam and D-alpha-amino-epsilon-caprolactam. In Achromobacter obae, this protein is 2-aminohexano-6-lactam racemase.